The following is a 375-amino-acid chain: 23S rRNA (uracil(747)-C(5))-methyltransferase RlmC (375 aa).

Residues Cys-3, Cys-11, Cys-14, and Cys-87 each coordinate [4Fe-4S] cluster. S-adenosyl-L-methionine is bound by residues Gln-212, Phe-241, Glu-262, and Asn-307. Cys-334 (nucleophile) is an active-site residue.

Belongs to the class I-like SAM-binding methyltransferase superfamily. RNA M5U methyltransferase family. RlmC subfamily.

It carries out the reaction uridine(747) in 23S rRNA + S-adenosyl-L-methionine = 5-methyluridine(747) in 23S rRNA + S-adenosyl-L-homocysteine + H(+). Its function is as follows. Catalyzes the formation of 5-methyl-uridine at position 747 (m5U747) in 23S rRNA. The sequence is that of 23S rRNA (uracil(747)-C(5))-methyltransferase RlmC from Escherichia coli O157:H7.